The following is a 921-amino-acid chain: Collagen alpha-1(IX) chain (921 aa).

The first 23 residues, 1-23, serve as a signal peptide directing secretion; the sequence is MKTCWKIPVFFFVCSFLEPWASA. Residues 24–268 are nonhelical region (NC4); it reads AVKRRPRFPV…ITPSQTTDER (245 aa). 2 disulfide bridges follow: cysteine 44/cysteine 242 and cysteine 198/cysteine 252. A Laminin G-like domain is found at 50–244; it reads GQDDLPGFDL…LQWMLIHCDP (195 aa). The N-linked (GlcNAc...) asparagine glycan is linked to asparagine 171. Zn(2+)-binding residues include aspartate 213, aspartate 215, and histidine 253. Disordered regions lie at residues 254-759 and 783-905; these read ELPA…APTD and RPDS…EPAS. 8 Collagen-like domains span residues 269 to 324, 325 to 356, 358 to 403, 416 to 472, 473 to 516, 587 to 643, 655 to 712, and 713 to 755; these read GPPG…TPGA, DGLT…GFPG, GIPG…GTIG, PPGR…GLRG, ITGI…AGPK, EKGS…GKLG, GPPG…GEPG, and LRGP…PPGR. A triple-helical region (COL3) region spans residues 269–405; sequence GPPGEQGPPG…PGPRGTIGFH (137 aa). 2 stretches are compositionally biased toward pro residues: residues 273–285 and 298–307; these read EQGP…PPGV and KGPPGPPGPA. The span at 368-383 shows a compositional bias: low complexity; the sequence is TAGLPGELGRVGPVGD. Residues 387–398 are compositionally biased toward pro residues; it reads RGPPGPPGPPGP. The nonhelical region (NC3) stretch occupies residues 406-417; it reads DGDPLCPNACPP. The triple-helical region (COL2) stretch occupies residues 418 to 756; that stretch reads GRSGYPGLPG…PGVQGPPGRA (339 aa). Residues 479–489 are compositionally biased toward basic and acidic residues; that stretch reads DKGEKGARGLD. Composition is skewed to low complexity over residues 602 to 621 and 630 to 650; these read NSGK…RGPQ and LGPV…SPGL. Residues 757 to 786 are nonhelical region (NC2); sequence PTDQHIKQVCMRVIQEHFAEMAASLKRPDS. The triple-helical region (COL1) stretch occupies residues 787-901; the sequence is GATGLPGRPG…PGPPGLPGFC (115 aa). 2 Collagen-like domains span residues 790–847 and 848–899; these read GLPG…GPPG and RGPN…GLPG. The segment covering 794–804 has biased composition (pro residues); sequence RPGPPGPPGPP. Positions 833–845 are enriched in basic and acidic residues; the sequence is PKGDLGEKGERGP. Residues 888–897 are compositionally biased toward pro residues; the sequence is VPGPPGPPGL. The nonhelical region (NC1) stretch occupies residues 902–921; that stretch reads EPASCTMQAGQRAFNKGPDP.

Belongs to the fibril-associated collagens with interrupted helices (FACIT) family. In terms of assembly, heterotrimer of an alpha 1(IX), an alpha 2(IX) and an alpha 3(IX) chain. In terms of processing, covalently linked to the telopeptides of type II collagen by lysine-derived cross-links. Post-translationally, prolines at the third position of the tripeptide repeating unit (G-X-Y) are hydroxylated in some or all of the chains.

It localises to the secreted. It is found in the extracellular space. Its subcellular location is the extracellular matrix. Its function is as follows. Structural component of hyaline cartilage and vitreous of the eye. This chain is Collagen alpha-1(IX) chain (COL9A1), found in Homo sapiens (Human).